The chain runs to 309 residues: Methionine synthase (309 aa).

Residues His-201, Cys-203, Glu-224, and Cys-285 each contribute to the Zn(2+) site.

This sequence belongs to the archaeal MetE family. It depends on Zn(2+) as a cofactor.

It participates in amino-acid biosynthesis; L-methionine biosynthesis via de novo pathway. With respect to regulation, is activated by phosphates. Catalyzes the transfer of a methyl group to L-homocysteine resulting in methionine formation. Can use methylcobalamin and methylcobinamide as methyl donors, but methylcobalamin is not considered to be the physiological substrate. It was proposed that, in vivo, a so-far-unidentified enzyme catalyzes methyltransfer from 5-methyltetrahydromethanopterin (5-CH3-H4MPT) to a corrinoid protein, and that the MetE gene product catalyzes the further transfer to L-homocysteine. Is not active with L-cysteine, coenzyme M, coenzyme B, glutathione or dithiothreitol as substrate. The chain is Methionine synthase from Methanothermobacter marburgensis (strain ATCC BAA-927 / DSM 2133 / JCM 14651 / NBRC 100331 / OCM 82 / Marburg) (Methanobacterium thermoautotrophicum).